Reading from the N-terminus, the 914-residue chain is Probable dipeptidyl-aminopeptidase B (914 aa).

Basic and acidic residues predominate over residues 1 to 10 (MATFSDHETS). The disordered stretch occupies residues 1–63 (MATFSDHETS…TGMDNGDRYR (63 aa)). Residues 1 to 91 (MATFSDHETS…KAATGGRARR (91 aa)) are Cytoplasmic-facing. Residues 20-35 (STSSASQTSSDSGLSS) are compositionally biased toward low complexity. Polar residues predominate over residues 45 to 56 (QPFSAPNGTTGM). A helical; Signal-anchor for type II membrane protein transmembrane segment spans residues 92-112 (IFWLLVLLCFGGWLLAFVLFL). The Vacuolar portion of the chain corresponds to 113 to 914 (TGGRANYQSA…RFKRSLPVLV (802 aa)). N-linked (GlcNAc...) asparagine glycans are attached at residues asparagine 348, asparagine 565, and asparagine 639. Serine 753 (charge relay system) is an active-site residue. A glycan (N-linked (GlcNAc...) asparagine) is linked at asparagine 807. Catalysis depends on charge relay system residues aspartate 830 and histidine 863.

Belongs to the peptidase S9B family.

It is found in the vacuole membrane. The enzyme catalyses Release of an N-terminal dipeptide, Xaa-Yaa-|-Zaa-, from a polypeptide, preferentially when Yaa is Pro, provided Zaa is neither Pro nor hydroxyproline.. Its function is as follows. Type IV dipeptidyl-peptidase which removes N-terminal dipeptides sequentially from polypeptides having unsubstituted N-termini provided that the penultimate residue is proline. The protein is Probable dipeptidyl-aminopeptidase B (dapB) of Aspergillus clavatus (strain ATCC 1007 / CBS 513.65 / DSM 816 / NCTC 3887 / NRRL 1 / QM 1276 / 107).